A 178-amino-acid chain; its full sequence is uncharacterized protein (178 aa).

Transmembrane regions (helical) follow at residues A29–F49, V76–L96, P105–F125, and I139–F159.

It localises to the cell membrane. This is an uncharacterized protein from Bacillus subtilis (strain 168).